A 73-amino-acid polypeptide reads, in one-letter code: Stigmurin (73 aa).

The first 22 residues, 1–22 (MQIKHLITLFFLVLIVADQCSA), serve as a signal peptide directing secretion. Lys-39 carries the lysine amide modification. A propeptide spanning residues 45 to 73 (EISAQIEQYKDLQKREAELEKLLDRLPMY) is cleaved from the precursor.

The protein belongs to the non-disulfide-bridged peptide (NDBP) superfamily. Short antimicrobial peptide (group 4) family. In terms of tissue distribution, expressed by the venom gland.

The protein localises to the secreted. In terms of biological role, antimicrobial peptide with activity against Gram-positive bacterial strains (S.aureus (MIC=2-140 uM), methicillin-resistant S.aureus (MRSA) (MIC=8-17 uM), S.epidermidis (MIC=1.17 uM), and the yeasts C.albicans, C.krusei, and C.glabrata (MIC=34-69 uM)). Acts by disrupting the cell membrane (observed on outer layer of the S.aureus). Is not active against Gram-negative bacteria (E.coli, E.Cloacae, P.aeruginosa), and the Gram-positive bacterium E.faecalis. Also shows toxicity against several cell lines, but possess low hemolytic activity at the highest concentration tested. Also shows antiparasitic activity against Trypanosoma cruzi by decreasing the viability of the epimastigote and trypomastigote forms of the parasite. Displays high hydroxyl radical scavenging activity (antioxidant action). In a wound infection model, the topical application of this peptide demonstrates antibacterial effects, as well as an ability to accelerate wound closure speed, which suggests the induction of tissue repair. In the model of polymicrobial sepsis, it exhibits an antibiotic effect, reducing the levels of microorganisms in the infectious focus and the inflammatory responses in the lung and cecum of septic animals. The sequence is that of Stigmurin from Tityus stigmurus (Brazilian scorpion).